Here is a 329-residue protein sequence, read N- to C-terminus: GTPase Obg (329 aa).

An Obg domain is found at 1–159; it reads MQFIDQARIS…WPLQLELKLL (159 aa). One can recognise an OBG-type G domain in the interval 160-328; the sequence is AEVGIIGLPN…MLDRVWSELG (169 aa). ATP-binding positions include 166-173, 191-195, 213-216, 280-283, and 309-311; these read GLPNAGKS, FTTLI, DIPG, NKQE, and SAA. Mg(2+) is bound by residues Ser173 and Thr193.

The protein belongs to the TRAFAC class OBG-HflX-like GTPase superfamily. OBG GTPase family. In terms of assembly, monomer. Mg(2+) is required as a cofactor.

The protein localises to the cytoplasm. Its function is as follows. An essential GTPase which binds GTP, GDP and possibly (p)ppGpp with moderate affinity, with high nucleotide exchange rates and a fairly low GTP hydrolysis rate. Plays a role in control of the cell cycle, stress response, ribosome biogenesis and in those bacteria that undergo differentiation, in morphogenesis control. This is GTPase Obg from Synechococcus sp. (strain CC9311).